A 102-amino-acid chain; its full sequence is Putative lipid-transfer protein DIR1 (102 aa).

The signal sequence occupies residues 1 to 25 (MASKKAAMVMMAMIVIMAMLVDTSV). Cystine bridges form between C30–C67, C40–C56, C57–C94, and C69–C102. Residue Q34 coordinates a 1-acyl-sn-glycero-3-phosphocholine. E36 serves as a coordination point for Zn(2+). N38 serves as a coordination point for a 1-acyl-sn-glycero-3-phosphocholine. H62 provides a ligand contact to Zn(2+).

This sequence belongs to the A9/FIL1 family. As to quaternary structure, self-interacts and binds to AZI1. Does not interact with PDLP1. The cofactor is Zn(2+).

Its subcellular location is the secreted. The protein localises to the extracellular space. It localises to the apoplast. The protein resides in the endoplasmic reticulum. It is found in the cell junction. Its subcellular location is the plasmodesma. In terms of biological role, putative lipid transfer protein required for systemic acquired resistance (SAR) long distance signaling. May interact with a lipid-derived molecule to promote long distance signaling associated with SAR. Together with AZI1, required for glycerol-3-phosphate- (G3P) and azelaic acid- (AA) induced systemic acquired resistance (SAR). Component of plant systemic immunity involved in priming defenses in a AA-dependent manner, by modulating production and/or translocation of a mobile signal(s) during SAR. Is able to bind with high affinity monoacylated phospholipids, mainly lysophosphatidylcholines. This Arabidopsis thaliana (Mouse-ear cress) protein is Putative lipid-transfer protein DIR1 (DIR1).